A 764-amino-acid chain; its full sequence is PFL-like enzyme TdcE (764 aa).

Positions Thr7–Arg629 constitute a PFL domain. Cys423 serves as the catalytic S-acetylcysteine intermediate. The active-site Cysteine radical intermediate is the Cys424. Residues Gly622 to Asp645 form a disordered region. In terms of domain architecture, Glycine radical spans Pro636–Leu764. At Gly739 the chain carries Glycine radical.

It belongs to the glycyl radical enzyme (GRE) family. PFL subfamily.

Its subcellular location is the cytoplasm. It catalyses the reaction 2-oxobutanoate + CoA = propanoyl-CoA + formate. The enzyme catalyses formate + acetyl-CoA = pyruvate + CoA. The protein operates within amino-acid degradation; L-threonine degradation via propanoate pathway; propanoate from L-threonine: step 2/4. With respect to regulation, dependent on PFL-activase. Functionally, catalyzes the cleavage of 2-ketobutyrate to propionyl-CoA and formate. It can also use pyruvate as substrate. The sequence is that of PFL-like enzyme TdcE (tdcE) from Escherichia coli (strain K12).